A 27-amino-acid chain; its full sequence is Secretin (27 aa).

Position 27 is a valine amide (V27).

This sequence belongs to the glucagon family.

It localises to the secreted. Its function is as follows. Hormone involved in different processes, such as regulation of the pH of the duodenal content, food intake and water homeostasis. Exerts its biological effects by binding to secretin receptor (SCTR), a G-protein coupled receptor expressed in the basolateral domain of several cells. Acts as a key gastrointestinal hormone by regulating the pH of the duodenal content. Secreted by S cells of the duodenum in the crypts of Lieberkuehn and regulates the pH of the duodenum by (1) inhibiting the secretion of gastric acid from the parietal cells of the stomach and (2) stimulating the production of bicarbonate (NaHCO(3)) from the ductal cells of the pancreas. Production of bicarbonate is essential to neutralize the pH and ensure no damage is done to the small intestine by the gastric acid. In addition to regulating the pH of the duodenal content, plays a central role in diet induced thermogenesis: acts as a non-sympathetic brown fat (BAT) activator mediating prandial thermogenesis, which consequentially induces satiation. Mechanistically, secretin released by the gut after a meal binds to secretin receptor (SCTR) in brown adipocytes, activating brown fat thermogenesis by stimulating lipolysis, which is sensed in the brain and promotes satiation. Also able to stimulate lipolysis in white adipocytes. Also plays an important role in cellular osmoregulation: released into the systemic circulation in response to hyperosmolality and acts at different levels in the hypothalamus, pituitary and kidney to regulate water homeostasis. Also plays a role in the central nervous system, possibly by acting as a neuropeptide hormone: required for hippocampal synaptic function and neural progenitor cells maintenance. The polypeptide is Secretin (Canis lupus familiaris (Dog)).